Reading from the N-terminus, the 216-residue chain is Serine acetyltransferase (216 aa).

Belongs to the transferase hexapeptide repeat family.

It localises to the cytoplasm. It carries out the reaction L-serine + acetyl-CoA = O-acetyl-L-serine + CoA. Its pathway is amino-acid biosynthesis; L-cysteine biosynthesis; L-cysteine from L-serine: step 1/2. The protein is Serine acetyltransferase (cysE) of Staphylococcus xylosus.